A 106-amino-acid chain; its full sequence is uncharacterized protein (106 aa).

This sequence belongs to the csb family.

This is an uncharacterized protein from Dictyostelium discoideum (Social amoeba).